The chain runs to 145 residues: HTH-type transcriptional regulator MhqR (145 aa).

Residues 5-137 (SLKLFIVLSR…CTEMLKRVGL (133 aa)) enclose the HTH marR-type domain. Residues 51-74 (LQQIGDKILLASGSITYVVDKLEQ) constitute a DNA-binding region (H-T-H motif).

In terms of biological role, negatively regulates mhqA, mhqED, mhqNOP, and azoR2 which may contribute to the degradation of aromatic compounds. This is HTH-type transcriptional regulator MhqR (mhqR) from Bacillus subtilis (strain 168).